Reading from the N-terminus, the 616-residue chain is Pyrophosphate--fructose 6-phosphate 1-phosphotransferase subunit alpha (616 aa).

The protein belongs to the phosphofructokinase type A (PFKA) family. PPi-dependent PFK group II subfamily. Clade 'Long' sub-subfamily. As to quaternary structure, tetramer of two alpha (regulatory) and two beta (catalytic) chains.

Its subcellular location is the cytoplasm. The protein operates within carbohydrate degradation; glycolysis; D-glyceraldehyde 3-phosphate and glycerone phosphate from D-glucose: step 3/4. Its activity is regulated as follows. Allosterically activated by fructose 2,6-bisphosphate. Regulatory subunit of pyrophosphate--fructose 6-phosphate 1-phosphotransferase. This is Pyrophosphate--fructose 6-phosphate 1-phosphotransferase subunit alpha from Solanum tuberosum (Potato).